A 358-amino-acid chain; its full sequence is Glutamine synthetase (358 aa).

The GS beta-grasp domain maps to 25-104 (VQAEYIWIDA…VLCECYDNDG (80 aa)). A GS catalytic domain is found at 111–358 (YRAHCKKVMD…ILVETTVLNN (248 aa)).

Belongs to the glutamine synthetase family. Homooctamer.

It is found in the cytoplasm. The enzyme catalyses L-glutamate + NH4(+) + ATP = L-glutamine + ADP + phosphate + H(+). The sequence is that of Glutamine synthetase (GLN1) from Cryptococcus neoformans var. neoformans serotype D (strain B-3501A) (Filobasidiella neoformans).